We begin with the raw amino-acid sequence, 121 residues long: Small ribosomal subunit protein uS13 (121 aa).

The segment at 92 to 121 (HRMGLPCRGQKTKTNARTRKGPRRGAARRK) is disordered. Residues 101–121 (QKTKTNARTRKGPRRGAARRK) are compositionally biased toward basic residues.

This sequence belongs to the universal ribosomal protein uS13 family. Part of the 30S ribosomal subunit. Forms a loose heterodimer with protein S19. Forms two bridges to the 50S subunit in the 70S ribosome.

Its function is as follows. Located at the top of the head of the 30S subunit, it contacts several helices of the 16S rRNA. In the 70S ribosome it contacts the 23S rRNA (bridge B1a) and protein L5 of the 50S subunit (bridge B1b), connecting the 2 subunits; these bridges are implicated in subunit movement. Contacts the tRNAs in the A and P-sites. The chain is Small ribosomal subunit protein uS13 from Desulfotalea psychrophila (strain LSv54 / DSM 12343).